The chain runs to 208 residues: Small ribosomal subunit protein uS4 (208 aa).

Residues 98-161 (QRLDNVVYRM…KTNPQIVRAI (64 aa)) enclose the S4 RNA-binding domain.

It belongs to the universal ribosomal protein uS4 family. In terms of assembly, part of the 30S ribosomal subunit. Contacts protein S5. The interaction surface between S4 and S5 is involved in control of translational fidelity.

Its function is as follows. One of the primary rRNA binding proteins, it binds directly to 16S rRNA where it nucleates assembly of the body of the 30S subunit. In terms of biological role, with S5 and S12 plays an important role in translational accuracy. This Campylobacter fetus subsp. fetus (strain 82-40) protein is Small ribosomal subunit protein uS4.